Reading from the N-terminus, the 884-residue chain is Valine--tRNA ligase (884 aa).

A 'HIGH' region motif is present at residues 47–57 (PNVTGALHIGH). The 'KMSKS' region motif lies at 525 to 529 (KMSKS). Lys528 serves as a coordination point for ATP. Residues 812 to 884 (AVDFEAELAR…QQRFRDAIGK (73 aa)) adopt a coiled-coil conformation.

Belongs to the class-I aminoacyl-tRNA synthetase family. ValS type 1 subfamily. As to quaternary structure, monomer.

It localises to the cytoplasm. It carries out the reaction tRNA(Val) + L-valine + ATP = L-valyl-tRNA(Val) + AMP + diphosphate. Its function is as follows. Catalyzes the attachment of valine to tRNA(Val). As ValRS can inadvertently accommodate and process structurally similar amino acids such as threonine, to avoid such errors, it has a 'posttransfer' editing activity that hydrolyzes mischarged Thr-tRNA(Val) in a tRNA-dependent manner. The chain is Valine--tRNA ligase from Nitratidesulfovibrio vulgaris (strain ATCC 29579 / DSM 644 / CCUG 34227 / NCIMB 8303 / VKM B-1760 / Hildenborough) (Desulfovibrio vulgaris).